Consider the following 183-residue polypeptide: ER membrane protein complex subunit 4 (183 aa).

Thr-2 carries the N-acetylthreonine modification. Over 2-66 (TAQGGLVANR…VQETDRILVE (65 aa)) the chain is Cytoplasmic. The segment at 20-39 (ELSGPGGGSRGRSDRGSGQG) is disordered. At Ser-36 the chain carries Phosphoserine. The helical transmembrane segment at 67-87 (KRCWDIALGPLKQIPMNLFIM) threads the bilayer. Residues 88–98 (YMAGNTISIFP) lie on the Lumenal side of the membrane. The chain crosses the membrane as a helical span at residues 99–120 (TMMVCMMAWRPIQALMAISATF). Residues 121–127 (KMLESSS) are Cytoplasmic-facing. The chain crosses the membrane as a helical span at residues 128–148 (QKFLQGLVYLIGNLMGLALAV). Residues 149–183 (YKCQSMGLLPTHASDWLAFIEPPERMEFSGGGLLL) lie on the Lumenal side of the membrane.

This sequence belongs to the EMC4 family. In terms of assembly, component of the ER membrane protein complex (EMC). As to expression, isoform 1 is expressed in brain and heart. Isoform 2 is expressed in heart.

Its subcellular location is the endoplasmic reticulum membrane. Part of the endoplasmic reticulum membrane protein complex (EMC) that enables the energy-independent insertion into endoplasmic reticulum membranes of newly synthesized membrane proteins. Preferentially accommodates proteins with transmembrane domains that are weakly hydrophobic or contain destabilizing features such as charged and aromatic residues. Involved in the cotranslational insertion of multi-pass membrane proteins in which stop-transfer membrane-anchor sequences become ER membrane spanning helices. It is also required for the post-translational insertion of tail-anchored/TA proteins in endoplasmic reticulum membranes. By mediating the proper cotranslational insertion of N-terminal transmembrane domains in an N-exo topology, with translocated N-terminus in the lumen of the ER, controls the topology of multi-pass membrane proteins like the G protein-coupled receptors. By regulating the insertion of various proteins in membranes, it is indirectly involved in many cellular processes. The polypeptide is ER membrane protein complex subunit 4 (EMC4) (Homo sapiens (Human)).